Reading from the N-terminus, the 268-residue chain is Esterase GME11355 (268 aa).

Residues S122, D212, and H240 each act as charge relay system in the active site.

The protein belongs to the LovG family.

Its pathway is secondary metabolite biosynthesis. In terms of biological role, esterase; part of the gene cluster that mediates the biosynthesis of dibenzodioxocinones such as pestalotiollide B, a novel class of inhibitors against cholesterol ester transfer protein (CEPT). The biosynthesis initiates from condensation of acetate and malonate units catalyzed by the non-reducing PKS pks8/GME11356. Pks8/GME11356 lacks a thioesterase (TE) domain, which is important to the cyclizing of the third ring of atrochrysone carboxylic acid, and the esterase GME11355 might play the role of TE and catalyzes the cyclization reaction of the C ring. The lactamase-like protein GME11357 (or other beta-lactamases in Pestalotiopsis microspora) probably hydrolyzes the thioester bond between the ACP of pks8/GME11356 and the intermediate to release atrochrysone carboxylic acid, which is spontaneously dehydrates to form endocrocin anthrone. Endocrocin anthrone is further converted to emodin via the endocrocin intermediate. Emodin is then oxidized by several enzymes such as the Baeyer-Villiger oxidase GME11358, the oxidoreductase GME11367, the short chain dehydrogenase/reductase GME11373, as well as by other oxidoreductases from the cluster, to modify the A and C rings and open the B ring, and finally yield monodictyphenone. The prenyltransferase GME11375 may catalyze the addition reaction between the C5 side chains and the carbon bone of dibenzodioxocinones. The remaining biochemical reactions to the final product dibenzodioxocinones should be methylation catalyzed by methyltransferase GME11366 and reduction and lactonization reaction catalyzed by a series of oxidordeuctases. The chain is Esterase GME11355 from Pestalotiopsis microspora.